Here is a 928-residue protein sequence, read N- to C-terminus: TBC1 domain family member 2A (928 aa).

At Met1 the chain carries N-acetylmethionine. A compositionally biased stretch (low complexity) spans 1-19; sequence MEGAGENAPESSSSAPGSE. The segment at 1–39 is disordered; that stretch reads MEGAGENAPESSSSAPGSEESARDPQVPPPEEESGDCAR. An interaction with CADH1 region spans residues 1–169; that stretch reads MEGAGENAPE…AGNGPVLHLE (169 aa). A PH domain is found at 45–142; the sequence is PKKLCGYLSK…WLQQLQMKRW (98 aa). Residues 225–275 are disordered; it reads NKQAQGTGHEPPGEDSPQSGEPQREEQPLASDASTPGREPEDSPKPAPKPS. The segment at 295–433 is interaction with RAC1; that stretch reads SEGITRNRTA…KVTQDFTHPP (139 aa). Residues 298–416 adopt a coiled-coil conformation; the sequence is ITRNRTAQEK…LMDKNHAKQQ (119 aa). Ser436 carries the phosphoserine modification. Positions 625–817 constitute a Rab-GAP TBC domain; it reads GVPREHRPRV…RVWDAFLYEG (193 aa). Residues 875–913 adopt a coiled-coil conformation; that stretch reads MKQLRQLRMVHRERLEAELRELEQLKAEYLERRASRRRA. Residues Ser915 and Ser920 each carry the phosphoserine modification.

In terms of assembly, interacts with activated RAC1 and CDH1. Expressed in a broad range of tissues, especially in kidney, liver, lung and placenta. Also expressed in keratinocytes and epithelia-containing organs. Isoform 2 is differentially expressed in prostate normal and cancer cells (at protein level).

The protein resides in the cytoplasm. It is found in the cytoplasmic vesicle. Its subcellular location is the cell junction. Its function is as follows. Acts as a GTPase-activating protein for RAB7A. Signal effector acting as a linker between RAC1 and RAB7A, leading to RAB7A inactivation and subsequent inhibition of cadherin degradation and reduced cell-cell adhesion. The chain is TBC1 domain family member 2A (TBC1D2) from Homo sapiens (Human).